The primary structure comprises 486 residues: UDP-GalNAc:beta-1,3-N-acetylgalactosaminyltransferase 2 (486 aa).

Over 1 to 10 the chain is Cytoplasmic; it reads MRHLLFLCPC. The chain crosses the membrane as a helical; Signal-anchor for type II membrane protein span at residues 11–31; the sequence is VIGVAFHLWLFNFSGLFSWFL. Over 32-486 the chain is Lumenal; sequence VWSPHSYDIV…CGNPCACEDR (455 aa). N-linked (GlcNAc...) asparagine glycans are attached at residues asparagine 103 and asparagine 160.

It belongs to the glycosyltransferase 31 family.

It is found in the golgi apparatus membrane. It localises to the endoplasmic reticulum. The enzyme catalyses 3-O-(N-acetyl-beta-D-glucosaminyl-(1-&gt;4)-alpha-D-mannosyl)-L-threonyl-[protein] + UDP-N-acetyl-alpha-D-galactosamine = 3-O-[beta-D-GalNAc-(1-&gt;3)-beta-D-GlcNAc-(1-&gt;4)-alpha-D-Man]-L-Thr-[protein] + UDP + H(+). It participates in protein modification; protein glycosylation. Beta-1,3-N-acetylgalactosaminyltransferase that synthesizes a unique carbohydrate structure, GalNAc-beta-1-3GlcNAc, on N- and O-glycans. Has no galactose nor galactosaminyl transferase activity toward any acceptor substrate. Involved in alpha-dystroglycan (dag1) glycosylation. The sequence is that of UDP-GalNAc:beta-1,3-N-acetylgalactosaminyltransferase 2 (b3galnt2) from Xenopus laevis (African clawed frog).